The primary structure comprises 42 residues: Photosystem II reaction center protein J (42 aa).

The helical transmembrane segment at 10–30 threads the bilayer; sequence IPLWIIGTLAGTLVIGLLAIF.

It belongs to the PsbJ family. As to quaternary structure, PSII is composed of 1 copy each of membrane proteins PsbA, PsbB, PsbC, PsbD, PsbE, PsbF, PsbH, PsbI, PsbJ, PsbK, PsbL, PsbM, PsbT, PsbX, PsbY, PsbZ, Psb30/Ycf12, at least 3 peripheral proteins of the oxygen-evolving complex and a large number of cofactors. It forms dimeric complexes.

It localises to the plastid. Its subcellular location is the chloroplast thylakoid membrane. Functionally, one of the components of the core complex of photosystem II (PSII). PSII is a light-driven water:plastoquinone oxidoreductase that uses light energy to abstract electrons from H(2)O, generating O(2) and a proton gradient subsequently used for ATP formation. It consists of a core antenna complex that captures photons, and an electron transfer chain that converts photonic excitation into a charge separation. The polypeptide is Photosystem II reaction center protein J (Chaetosphaeridium globosum (Charophycean green alga)).